A 1029-amino-acid chain; its full sequence is Cilia- and flagella-associated protein 91 (1029 aa).

Disordered regions lie at residues 72–97 and 117–170; these read NYRPAANDPNDTRQRSDALAVSGPNR and PPSQ…PWEP. Residues 272–299 are a coiled coil; that stretch reads LELLDNALQVREEELDDENRLRVEARKE. The span at 837–854 shows a compositional bias: low complexity; it reads ENQDQQEPQPQPQPSSSS. Disordered regions lie at residues 837–861 and 876–1029; these read ENQDQQEPQPQPQPSSSSGALDLAD and GEPS…EAAE. Positions 890–910 are enriched in acidic residues; the sequence is QQLEADAEAEAEAEAEAEAGA. The segment covering 911–921 has biased composition (low complexity); sequence EAEASAQAGAE. A compositionally biased stretch (acidic residues) spans 922 to 932; sequence AEAEAGVEAEA. Residues 933 to 944 are compositionally biased toward low complexity; that stretch reads EASAGAEASVGA. Residues 964 to 982 are compositionally biased toward acidic residues; that stretch reads PEAEAEAEAGAEAEAENGA. Residues 984–999 show a composition bias toward basic and acidic residues; that stretch reads AEARLGGEEEGFREGE. Over residues 1000–1015 the composition is skewed to gly residues; the sequence is GQGGAAAGEAGPGGEL. Acidic residues predominate over residues 1016-1029; sequence AEGEGEAGEGEAAE.

The protein belongs to the CFAP91 family. As to quaternary structure, identified in a spoke-associated complex containing CFAP61, CFAP91 and CFAP251; the complex is associated with the radial spokes of the axoneme. The complex associates with Calmodulin; the association is calcium sensitive. Interacts with RSP3.

It localises to the cytoplasm. The protein localises to the cytoskeleton. It is found in the flagellum axoneme. Its function is as follows. As component of a spoke-associated complex, regulates flagellar dynein activity by mediating regulatory signals between the radial spokes and dynein arms. The polypeptide is Cilia- and flagella-associated protein 91 (Chlamydomonas reinhardtii (Chlamydomonas smithii)).